Reading from the N-terminus, the 723-residue chain is Polyribonucleotide nucleotidyltransferase (723 aa).

Residues Asp488 and Asp494 each coordinate Mg(2+). Residues 555–614 form the KH domain; that stretch reads PRMITMKIHPDKIREVIGKGGSTIQALTKETGTTIDIQEDGTITIASTSTDGMAEAKRRI. Residues 624–692 form the S1 motif domain; sequence GKIYAGTVLK…EKGRLRLSLK (69 aa). Residues 701 to 723 are disordered; that stretch reads SISPINAGEAAAPAAPAEGSEQQ. Residues 707-723 are compositionally biased toward low complexity; it reads AGEAAAPAAPAEGSEQQ.

Belongs to the polyribonucleotide nucleotidyltransferase family. Mg(2+) serves as cofactor.

It localises to the cytoplasm. It carries out the reaction RNA(n+1) + phosphate = RNA(n) + a ribonucleoside 5'-diphosphate. Its function is as follows. Involved in mRNA degradation. Catalyzes the phosphorolysis of single-stranded polyribonucleotides processively in the 3'- to 5'-direction. This is Polyribonucleotide nucleotidyltransferase from Cupriavidus necator (strain ATCC 17699 / DSM 428 / KCTC 22496 / NCIMB 10442 / H16 / Stanier 337) (Ralstonia eutropha).